We begin with the raw amino-acid sequence, 1483 residues long: Tyrosine-protein kinase BAZ1B (1483 aa).

In terms of domain architecture, WAC spans 20–126 (EPLFTIPHTQ…GEECDFEVGK (107 aa)). A disordered region spans residues 145-212 (EEATEKKSDG…TSLKKGERKW (68 aa)). Basic and acidic residues-rich tracts occupy residues 148 to 165 (TEKKSDGACDSPSSDKEN) and 172 to 195 (DHQKKETVVKEDEGRRESINDRAR). Phosphoserine occurs at positions 152, 158, and 161. Positions 207 to 213 (KGERKWA) match the C motif motif. At Thr266 the chain carries Phosphothreonine. A disordered region spans residues 302–333 (NPSTKRKNTGSPDRKPSKKSKTDNSSLSSPLN). Residues Ser330, Ser345, Ser347, Ser349, Ser361, and Ser374 each carry the phosphoserine modification. Disordered regions lie at residues 379–432 (HTNF…KTPK) and 446–470 (GTQKMTRAPRNSGGTPRTSSKPHKH). 2 stretches are compositionally biased toward basic residues: residues 384–395 (IPKKGPPAKKPG) and 423–432 (SPKKGLKTPK). Positions 533 to 586 (KRWASMSEEQRKEYLKKKREELKKKLKEKAKERREKEMLERLEKQKRYEDQELT) form a coiled coil. Positions 604 to 668 (NTLFGDVAMV…LQTLLQDEIA (65 aa)) constitute a DDT domain. A phosphoserine mark is found at Ser699, Ser705, Ser708, and Ser716. A coiled-coil region spans residues 768-814 (TRQQMSAELWKERLAVLKEENDKKRAEKQKRKEMEAKNKENGKVENG). Residues 788–810 (NDKKRAEKQKRKEMEAKNKENGK) show a composition bias toward basic and acidic residues. The disordered stretch occupies residues 788 to 817 (NDKKRAEKQKRKEMEAKNKENGKVENGLGK). Lys826 is covalently cross-linked (Glycyl lysine isopeptide (Lys-Gly) (interchain with G-Cter in SUMO1); alternate). Lys826 participates in a covalent cross-link: Glycyl lysine isopeptide (Lys-Gly) (interchain with G-Cter in SUMO2); alternate. The stretch at 850–893 (IQAKKEREIQEREMKVKLERQAEEERIRKHKAAAEKAFQEGIAK) forms a coiled coil. A Glycyl lysine isopeptide (Lys-Gly) (interchain with G-Cter in SUMO2) cross-link involves residue Lys853. Ser947 bears the Phosphoserine mark. Residues Lys1043, Lys1089, and Lys1107 each participate in a glycyl lysine isopeptide (Lys-Gly) (interchain with G-Cter in SUMO2) cross-link. The segment at 1184–1234 (NARCKVCRKKGEDDKLILCDECNKAFHLFCLRPALYEVPDGEWQCPACQPA) adopts a PHD-type zinc-finger fold. Residues 1237-1326 (RRNSRGRNYT…PKAPPVDDAE (90 aa)) are disordered. Residues 1245–1283 (YTEESASEDSEDDESDEEEEEEEEEEEEEDYEVAGLRLR) are a coiled coil. Residues 1249-1276 (SASEDSEDDESDEEEEEEEEEEEEEDYE) are compositionally biased toward acidic residues. 2 stretches are compositionally biased toward basic residues: residues 1282-1292 (LRPRKTIRGKH) and 1301-1316 (SGRRPGKKPHSTRRSQ). Position 1315 is a phosphoserine (Ser1315). At Lys1335 the chain carries N6-acetyllysine. The Bromo domain maps to 1339 to 1443 (RRQSLELQKC…QCLVALLHKH (105 aa)). Ser1342 and Ser1468 each carry phosphoserine. Residues 1455–1483 (KKFPDRLAEDEGDSEPEAVGQSRGRRQKK) are disordered.

This sequence belongs to the WAL family. BAZ1B subfamily. In terms of assembly, component of the WICH-1 ISWI chromatin remodeling complex, at least composed of SMARCA1 and BAZ1B/WSTF, which regulates the spacing of histone octamers on the DNA template to facilitate access to DNA. Within the WICH-1 ISWI chromatin remodeling complex interacts with SMARCA1; the interaction is direct. Component of the WICH-5 ISWI chromatin remodeling complex (also called the WICH complex), at least composed of SMARCA5/SNF2H and BAZ1B/WSTF, which regulates the spacing of histone octamers on the DNA template to facilitate access to DNA. Within the WICH-5 ISWI chromatin remodeling complex interacts with SMARCA5/SNF2H; the interaction is direct. Component of the B-WICH chromatin remodeling complex, at least composed of SMARCA5/SNF2H, BAZ1B/WSTF, SF3B1, DEK, MYO1C, ERCC6, MYBBP1A and DDX21. Within the B-WICH chromatin remodeling complex, interacts with SMARCA5/SNF2H, DDX21, DEK, MYBBP1A, SF3B1, ERCC6 and MYO1C. Interacts with PCNA; the interaction is direct and is required for BAZ1B/WSTF binding to replication foci during S phase. Interacts with CDT1. The cofactor is Mn(2+). As to expression, ubiquitously expressed with high levels of expression in heart, brain, placenta, skeletal muscle and ovary.

It localises to the nucleus. It carries out the reaction L-tyrosyl-[protein] + ATP = O-phospho-L-tyrosyl-[protein] + ADP + H(+). In terms of biological role, atypical tyrosine-protein kinase that plays a central role in chromatin remodeling and acts as a transcription regulator. Involved in DNA damage response by phosphorylating 'Tyr-142' of histone H2AX (H2AXY142ph). H2AXY142ph plays a central role in DNA repair and acts as a mark that distinguishes between apoptotic and repair responses to genotoxic stress. Regulatory subunit of the ATP-dependent WICH-1 and WICH-5 ISWI chromatin remodeling complexes, which form ordered nucleosome arrays on chromatin and facilitate access to DNA during DNA-templated processes such as DNA replication, transcription, and repair. Both complexes regulate the spacing of nucleosomes along the chromatin and have the ability to slide mononucleosomes to the center of a DNA template. The WICH-1 ISWI chromatin remodeling complex has a lower ATP hydrolysis rate than the WICH-5 ISWI chromatin remodeling complex. The WICH-5 ISWI chromatin-remodeling complex regulates the transcription of various genes, has a role in RNA polymerase I transcription. Within the B-WICH complex has a role in RNA polymerase III transcription. Mediates the recruitment of the WICH-5 ISWI chromatin remodeling complex to replication foci during DNA replication. The protein is Tyrosine-protein kinase BAZ1B (BAZ1B) of Homo sapiens (Human).